A 607-amino-acid polypeptide reads, in one-letter code: Glycosyltransferase 25 family member (607 aa).

Positions 1-22 (MKPVSCVGLLVLLVGVLVTVKG) are cleaved as a signal peptide. Residues Asn-226, Asn-254, Asn-514, and Asn-565 are each glycosylated (N-linked (GlcNAc...) asparagine). The disordered stretch occupies residues 566 to 607 (DTSDSSAEKKGDKEQLSSKTLMDSTISRDEHELSVANRKSEL). Basic and acidic residues-rich tracts occupy residues 571–581 (SAEKKGDKEQL) and 591–607 (ISRDEHELSVANRKSEL). The Prevents secretion from ER signature appears at 604-607 (KSEL).

The protein belongs to the glycosyltransferase 25 family.

It localises to the endoplasmic reticulum lumen. This Aedes aegypti (Yellowfever mosquito) protein is Glycosyltransferase 25 family member.